A 375-amino-acid polypeptide reads, in one-letter code: Growth/differentiation factor 8 (375 aa).

Residues 1–23 (MQKLAVYVYIYLFMLISVDPVAL) form the signal peptide. The propeptide occupies 24 to 266 (DDGSQPTENA…VTDTPKRSRR (243 aa)). N71 carries an N-linked (GlcNAc...) asparagine glycan. Disulfide bonds link C272-C282, C281-C340, C309-C372, and C313-C374.

This sequence belongs to the TGF-beta family. As to quaternary structure, homodimer; disulfide-linked.

Its subcellular location is the secreted. Its function is as follows. Acts specifically as a negative regulator of skeletal muscle growth. The polypeptide is Growth/differentiation factor 8 (MSTN) (Anser anser anser (Western greylag goose)).